A 327-amino-acid chain; its full sequence is Alkene monooxygenase system, ferredoxin--NAD(+) reductase component (327 aa).

In terms of domain architecture, 2Fe-2S ferredoxin-type spans 1–89; the sequence is MRLNDGRSFS…DLEINVRAGD (89 aa). Positions 32, 37, 40, and 73 each coordinate [2Fe-2S] cluster. Residues 96–194 enclose the FAD-binding FR-type domain; the sequence is PRRHAARVTV…EGPYGRAYLR (99 aa).

The protein belongs to the bacterial ring-hydroxylating dioxygenase ferredoxin reductase family. As to quaternary structure, monomer. The alkene monooxygenase multicomponent enzyme system is composed of an electron transfer component and a monooxygenase component interacting with the effector protein XamoD. The electron transfer component is composed of a ferredoxin reductase (XamoF) and a ferredoxin (XamoC), and the monooxygenase component is formed by a heterohexamer (dimer of heterotrimers) of two alpha subunits (XamoA), two beta subunits (XamoE) and two gamma subunits (XamoB). FAD serves as cofactor. The cofactor is [2Fe-2S] cluster.

It is found in the cytoplasm. The catalysed reaction is 2 reduced [2Fe-2S]-[ferredoxin] + NAD(+) + H(+) = 2 oxidized [2Fe-2S]-[ferredoxin] + NADH. Its function is as follows. Reductase component of the alkene monooxygenase multicomponent enzyme system which catalyzes the O2- and NADH-dependent epoxidation of short chain (C2 to C6) alkenes to their corresponding epoxides. Ferredoxin reductase catalyzes the transfer of electrons from NADH to ferredoxin (XamoC). NADPH is also effective but with a rate approximately 3-fold lower than with NADH. The chain is Alkene monooxygenase system, ferredoxin--NAD(+) reductase component from Xanthobacter autotrophicus (strain ATCC BAA-1158 / Py2).